Reading from the N-terminus, the 192-residue chain is Probable apo-citrate lyase phosphoribosyl-dephospho-CoA transferase (192 aa).

It belongs to the CitX family.

The catalysed reaction is apo-[citrate lyase ACP] + 2'-(5''-triphospho-alpha-D-ribosyl)-3'-dephospho-CoA = holo-[citrate lyase ACP] + diphosphate. In terms of biological role, transfers 2-(5''-triphosphoribosyl)-3'-dephosphocoenzyme-A on a serine residue to the apo-acyl carrier protein (gamma chain) of the citrate lyase to yield holo-acyl carrier protein. This Streptococcus pyogenes serotype M18 (strain MGAS8232) protein is Probable apo-citrate lyase phosphoribosyl-dephospho-CoA transferase.